Here is a 153-residue protein sequence, read N- to C-terminus: Regulator of ribonuclease activity B (153 aa).

Residues 114–153 (DPNADDDEYGDDGEFLDDEDEYGDDGEFFDDEDEEEPRVH) are disordered. Positions 115 to 153 (PNADDDEYGDDGEFLDDEDEYGDDGEFFDDEDEEEPRVH) are enriched in acidic residues.

Belongs to the RraB family. Interacts with the C-terminal region of Rne.

The protein resides in the cytoplasm. Its function is as follows. Globally modulates RNA abundance by binding to RNase E (Rne) and regulating its endonucleolytic activity. Can modulate Rne action in a substrate-dependent manner by altering the composition of the degradosome. This Haemophilus influenzae (strain ATCC 51907 / DSM 11121 / KW20 / Rd) protein is Regulator of ribonuclease activity B.